The chain runs to 444 residues: Proline--tRNA ligase (444 aa).

The protein belongs to the class-II aminoacyl-tRNA synthetase family. ProS type 2 subfamily. As to quaternary structure, homodimer.

The protein localises to the cytoplasm. It catalyses the reaction tRNA(Pro) + L-proline + ATP = L-prolyl-tRNA(Pro) + AMP + diphosphate. Its function is as follows. Catalyzes the attachment of proline to tRNA(Pro) in a two-step reaction: proline is first activated by ATP to form Pro-AMP and then transferred to the acceptor end of tRNA(Pro). This chain is Proline--tRNA ligase, found in Pelagibacter ubique (strain HTCC1062).